The chain runs to 335 residues: Urokinase plasminogen activator surface receptor (335 aa).

Residues 1–22 form the signal peptide; that stretch reads MGHPPLLPLLLLLHTCVPASWG. UPAR/Ly6 domains lie at 23-114, 115-213, and 214-305; these read LRCM…RSRY, LECI…PQNG, and RQCY…YRSG. Cystine bridges form between Cys25-Cys46, Cys28-Cys34, and Cys39-Cys67. A glycan (N-linked (GlcNAc...) asparagine) is linked at Asn74. Intrachain disulfides connect Cys93–Cys98, Cys117–Cys144, Cys120–Cys127, Cys137–Cys169, Cys175–Cys192, Cys193–Cys198, Cys216–Cys244, Cys219–Cys227, Cys237–Cys263, Cys269–Cys287, and Cys288–Cys293. N-linked (GlcNAc...) asparagine glycosylation is found at Asn184, Asn194, Asn222, and Asn255. The GPI-anchor amidated glycine moiety is linked to residue Gly305. Residues 306 to 335 constitute a propeptide, removed in mature form; it reads AAPQPGPAHLSLTITLLMTARLWGGTLLWT.

In terms of assembly, monomer. Interacts with MRC2. Interacts (via the UPAR/Ly6 domains) with SRPX2. Interacts with FAP (seprase); the interaction occurs at the cell surface of invadopodia membrane. Interacts with SORL1 (via N-terminal ectodomain); this interaction decreases PLAUR internalization. The ternary complex composed of PLAUR-PLAU-SERPINE1 also interacts with SORL1. Interacts with CD82; this interaction prevents PLAUR from binding to its high affinity ligand PLAU. As to expression, expressed in neurons of the rolandic area of the brain (at protein level). Expressed in the brain.

Its subcellular location is the cell membrane. It localises to the cell projection. The protein resides in the invadopodium membrane. It is found in the secreted. Functionally, acts as a receptor for urokinase plasminogen activator. Plays a role in localizing and promoting plasmin formation. Mediates the proteolysis-independent signal transduction activation effects of U-PA. It is subject to negative-feedback regulation by U-PA which cleaves it into an inactive form. This chain is Urokinase plasminogen activator surface receptor (PLAUR), found in Homo sapiens (Human).